The primary structure comprises 290 residues: RIO-type serine/threonine-protein kinase Rio1 (290 aa).

One can recognise a Protein kinase domain in the interval 76 to 290 (TEYIGIVNSG…PIDEAMIKQL (215 aa)). Residues 82-90 (VNSGKEAVV) and lysine 103 contribute to the ATP site. The active-site Proton acceptor is the aspartate 214. Positions 219 and 231 each coordinate Mg(2+). Catalysis depends on aspartate 231, which acts as the 4-aspartylphosphate intermediate.

It belongs to the protein kinase superfamily. RIO-type Ser/Thr kinase family.

The catalysed reaction is L-seryl-[protein] + ATP = O-phospho-L-seryl-[protein] + ADP + H(+). It carries out the reaction L-threonyl-[protein] + ATP = O-phospho-L-threonyl-[protein] + ADP + H(+). The enzyme catalyses ATP + H2O = ADP + phosphate + H(+). Despite the protein kinase domain is proposed to act predominantly as an ATPase. The chain is RIO-type serine/threonine-protein kinase Rio1 (rio1) from Methanocaldococcus jannaschii (strain ATCC 43067 / DSM 2661 / JAL-1 / JCM 10045 / NBRC 100440) (Methanococcus jannaschii).